Consider the following 729-residue polypeptide: Fatty acid oxidation complex subunit alpha (729 aa).

The enoyl-CoA hydratase/isomerase stretch occupies residues 1–189; sequence MLYKGDTLYL…KIGLVDGVVK (189 aa). Residue Asp-296 coordinates substrate. A 3-hydroxyacyl-CoA dehydrogenase region spans residues 311-729; the sequence is ETPKQAAVLG…ARPVGSLKTA (419 aa). NAD(+)-binding positions include Met-324, Asp-343, 400–402, Lys-407, and Ser-429; that span reads VVE. Catalysis depends on His-450, which acts as the For 3-hydroxyacyl-CoA dehydrogenase activity. NAD(+) is bound at residue Asn-453. Substrate contacts are provided by Asn-500 and Tyr-660. Positions 708-729 are disordered; sequence RHNEPYYPPVEPARPVGSLKTA.

The protein in the N-terminal section; belongs to the enoyl-CoA hydratase/isomerase family. This sequence in the C-terminal section; belongs to the 3-hydroxyacyl-CoA dehydrogenase family. As to quaternary structure, heterotetramer of two alpha chains (FadB) and two beta chains (FadA).

It carries out the reaction a (3S)-3-hydroxyacyl-CoA + NAD(+) = a 3-oxoacyl-CoA + NADH + H(+). It catalyses the reaction a (3S)-3-hydroxyacyl-CoA = a (2E)-enoyl-CoA + H2O. The enzyme catalyses a 4-saturated-(3S)-3-hydroxyacyl-CoA = a (3E)-enoyl-CoA + H2O. The catalysed reaction is (3S)-3-hydroxybutanoyl-CoA = (3R)-3-hydroxybutanoyl-CoA. It carries out the reaction a (3Z)-enoyl-CoA = a 4-saturated (2E)-enoyl-CoA. It catalyses the reaction a (3E)-enoyl-CoA = a 4-saturated (2E)-enoyl-CoA. Its pathway is lipid metabolism; fatty acid beta-oxidation. Involved in the aerobic and anaerobic degradation of long-chain fatty acids via beta-oxidation cycle. Catalyzes the formation of 3-oxoacyl-CoA from enoyl-CoA via L-3-hydroxyacyl-CoA. It can also use D-3-hydroxyacyl-CoA and cis-3-enoyl-CoA as substrate. This Salmonella agona (strain SL483) protein is Fatty acid oxidation complex subunit alpha.